Consider the following 38-residue polypeptide: Exendin-1 (38 aa).

Ser-32 carries O-linked (HexNAc...) serine; in Exendin-1 and Exendin-1b glycosylation.

This sequence belongs to the glucagon family. Post-translationally, O-linked glycan consists of Hex-HexNAc saccharide. Glycosylation may be of interest for the biological stability of exendin-1 and exendin-1b. As to expression, expressed by the venom gland.

It is found in the secreted. Functionally, O-linked and free exendin-1 and exendin-1b have vasoactive intestinal peptide(VIP)/secretin-like biological activities. They interact with rat and human VIP receptors 1 (VIPR1) and 2 (VIPR2), with the highest affinity for the human VIPR2. They induce hypotension that is mediated by relaxation of cardiac smooth muscle. This Heloderma horridum horridum (Mexican beaded lizard) protein is Exendin-1.